A 715-amino-acid chain; its full sequence is uncharacterized protein (715 aa).

Residues 688–708 traverse the membrane as a helical segment; that stretch reads VWKFNPALYSTITNIFLLIIF.

It belongs to the plectrovirus ORF1 family.

The protein resides in the host membrane. This is an uncharacterized protein from Spiroplasma virus SpV1-R8A2 B (SpV1).